A 299-amino-acid chain; its full sequence is Ficolin-3 (299 aa).

An N-terminal signal peptide occupies residues 1–23; it reads MDLLWILPSLWLLLLGGPACLKT. Residues 44-81 are disordered; it reads PSCPGAPGSPGEKGAPGPQGPPGPPGKMGPKGEPGDPV. Positions 48–80 constitute a Collagen-like domain; that stretch reads GAPGSPGEKGAPGPQGPPGPPGKMGPKGEPGDP. Hydroxyproline occurs at positions 50, 53, 59, 65, 68, and 77. A compositionally biased stretch (pro residues) spans 61–70; sequence PQGPPGPPGK. Residues 84 to 299 enclose the Fibrinogen C-terminal domain; that stretch reads LRCQEGPRNC…PYRRVRMMLR (216 aa). 2 cysteine pairs are disulfide-bonded: cysteine 86/cysteine 110 and cysteine 93/cysteine 121. Asparagine 189 carries N-linked (GlcNAc...) (complex) asparagine glycosylation. Aspartate 237, aspartate 239, serine 241, and serine 243 together coordinate Ca(2+). Cysteine 245 and cysteine 258 are disulfide-bonded. Residue 258 to 259 participates in a carbohydrate binding; sequence CY.

This sequence belongs to the ficolin lectin family. In terms of assembly, homotrimer. May form an octadecamer consisting of an elementary trimer unit. Does not interact with fibronectin, elastin or zymosan. Interacts with MASP1 and MASP2. The N-terminus is blocked. Liver and lung. In liver it is produced by bile duct epithelial cells and hepatocytes. In lung it is produced by both ciliated bronchial epithelial cells and type II alveolar epithelial cells.

It localises to the secreted. May function in innate immunity through activation of the lectin complement pathway. Calcium-dependent and GlcNAc-binding lectin. Has affinity with GalNAc, GlcNAc, D-fucose, as mono/oligosaccharide and lipopolysaccharides from S.typhimurium and S.minnesota. The polypeptide is Ficolin-3 (FCN3) (Homo sapiens (Human)).